The following is an 89-amino-acid chain: MSITAERKAELIKTHARGEADTGSAEVQVAILSERISNLTEHFKTHKKDNHSRRGLLKLVSQRRSLLDHLKKADQARYQDLIEKLGLRR.

Positions Met1–Ala20 are enriched in basic and acidic residues. The segment at Met1 to Ser24 is disordered.

The protein belongs to the universal ribosomal protein uS15 family. As to quaternary structure, part of the 30S ribosomal subunit. Forms a bridge to the 50S subunit in the 70S ribosome, contacting the 23S rRNA.

Its function is as follows. One of the primary rRNA binding proteins, it binds directly to 16S rRNA where it helps nucleate assembly of the platform of the 30S subunit by binding and bridging several RNA helices of the 16S rRNA. In terms of biological role, forms an intersubunit bridge (bridge B4) with the 23S rRNA of the 50S subunit in the ribosome. This chain is Small ribosomal subunit protein uS15, found in Phenylobacterium zucineum (strain HLK1).